The following is a 1370-amino-acid chain: DNA-directed RNA polymerase subunit beta (1370 aa).

The protein belongs to the RNA polymerase beta chain family. The RNAP catalytic core consists of 2 alpha, 1 beta, 1 beta' and 1 omega subunit. When a sigma factor is associated with the core the holoenzyme is formed, which can initiate transcription.

It carries out the reaction RNA(n) + a ribonucleoside 5'-triphosphate = RNA(n+1) + diphosphate. Its function is as follows. DNA-dependent RNA polymerase catalyzes the transcription of DNA into RNA using the four ribonucleoside triphosphates as substrates. In Polaromonas naphthalenivorans (strain CJ2), this protein is DNA-directed RNA polymerase subunit beta.